A 504-amino-acid polypeptide reads, in one-letter code: Crh-like protein CRH12 (504 aa).

The N-terminal stretch at 1-18 is a signal peptide; that stretch reads MYKQILTFLILFLRYILS. Residues 19–270 form the GH16 domain; the sequence is EFPDDPYEDD…YSKALTYSYG (252 aa). Residue N34 is glycosylated (N-linked (GlcNAc...) asparagine). A disulfide bridge connects residues C43 and C51. E138 serves as the catalytic Nucleophile. Catalysis depends on E143, which acts as the Proton donor. E143 serves as a coordination point for chitin. A glycan (N-linked (GlcNAc...) asparagine) is linked at N161. Chitin-binding residues include K221, W225, and T234. The interval 304–404 is disordered; that stretch reads KPTPKQETDD…LDISTQLPPL (101 aa). The segment covering 316–329 has biased composition (polar residues); the sequence is VLTSSKSQRVATTI. Residues 356-378 show a composition bias toward acidic residues; sequence WETEQDETGTDDTENSDNEEEES. N-linked (GlcNAc...) asparagine glycosylation is found at N407, N416, and N425. G479 carries GPI-anchor amidated glycine lipidation. Residues 480–504 constitute a propeptide, removed in mature form; the sequence is VSSILATSFSSVVIAEILVIVVLLL.

Belongs to the glycosyl hydrolase 16 family. CRH1 subfamily. In terms of processing, the GPI-anchor is attached to the protein in the endoplasmic reticulum and serves to target the protein to the cell surface. There, the glucosamine-inositol phospholipid moiety is cleaved off and the GPI-modified mannoprotein is covalently attached via its lipidless GPI glycan remnant to the 1,6-beta-glucan of the outer cell wall layer.

The protein resides in the secreted. It is found in the cell wall. Its subcellular location is the membrane. The enzyme catalyses Random endo-hydrolysis of N-acetyl-beta-D-glucosaminide (1-&gt;4)-beta-linkages in chitin and chitodextrins.. Dual chitinase/transglycosylase that plays a role in cell wall architecture. Chitinase and transglycosylase activities are coupled. Required for the polysaccharide cross-linking at the septa and the cell wall. More specifically, transfers chitin to 1,6-beta-glucan in the cell wall. Plays an important role in fungal pathogenesis via its functions in cell wall assembly and regeneration, filamentation, and adherence to host cells. This Candida albicans (strain SC5314 / ATCC MYA-2876) (Yeast) protein is Crh-like protein CRH12 (CRH12).